The sequence spans 226 residues: Large ribosomal subunit protein uL1 (226 aa).

This sequence belongs to the universal ribosomal protein uL1 family. Part of the 50S ribosomal subunit.

In terms of biological role, binds directly to 23S rRNA. The L1 stalk is quite mobile in the ribosome, and is involved in E site tRNA release. Protein L1 is also a translational repressor protein, it controls the translation of the L11 operon by binding to its mRNA. In Mycoplasma pneumoniae (strain ATCC 29342 / M129 / Subtype 1) (Mycoplasmoides pneumoniae), this protein is Large ribosomal subunit protein uL1.